Reading from the N-terminus, the 319-residue chain is Acetyl esterase (319 aa).

An Involved in the stabilization of the negatively charged intermediate by the formation of the oxyanion hole motif is present at residues 91-93; that stretch reads HGG. Residues Ser165, Asp262, and His292 contribute to the active site.

This sequence belongs to the 'GDXG' lipolytic enzyme family. In terms of assembly, homodimer. Interacts with MalT and MelA.

The protein resides in the cytoplasm. Its function is as follows. Displays esterase activity towards short chain fatty esters (acyl chain length of up to 8 carbons). Able to hydrolyze triacetylglycerol (triacetin) and tributyrylglycerol (tributyrin), but not trioleylglycerol (triolein) or cholesterol oleate. Negatively regulates MalT activity by antagonizing maltotriose binding. Inhibits MelA galactosidase activity. This is Acetyl esterase from Shigella boydii serotype 18 (strain CDC 3083-94 / BS512).